A 79-amino-acid chain; its full sequence is MQALRVSRALIRSFNTTARNRFQNRVPEKQKLFQEDNDIPLYLKGGIVDNILYRVTMGLCLGGSAYSMYCLGWASFPRN.

Residues 1–21 (MQALRVSRALIRSFNTTARNR) constitute a mitochondrion transit peptide. The Mitochondrial matrix segment spans residues 22–46 (FQNRVPEKQKLFQEDNDIPLYLKGG). A helical transmembrane segment spans residues 47 to 75 (IVDNILYRVTMGLCLGGSAYSMYCLGWAS). Residues 76 to 79 (FPRN) are Mitochondrial intermembrane-facing.

It belongs to the cytochrome c oxidase VIIa family. In terms of assembly, component of the complex IV (CIV, cytochrome c oxidase), a multisubunit enzyme composed of 14 subunits. The complex is composed of a catalytic core of 3 subunits MT-CO1, MT-CO2 and MT-CO3, encoded in the mitochondrial DNA, and 11 supernumerary subunits COX4I1 (or COX4I2), COX5A, COX5B, COX6A2 (or COX6A1), COX6B1 (or COX6B2), COX6C, COX7A1 (or COX7A2), COX7B, COX7C, COX8B and NDUFA4, which are encoded in the nuclear genome. The complex exists as a monomer or a dimer and forms supercomplexes (SCs) in the inner mitochondrial membrane with NADH-ubiquinone oxidoreductase (complex I, CI) and ubiquinol-cytochrome c oxidoreductase (cytochrome b-c1 complex, complex III, CIII), resulting in different assemblies (supercomplex SCI(1)III(2)IV(1) and megacomplex MCI(2)III(2)IV(2)).

It is found in the mitochondrion inner membrane. It functions in the pathway energy metabolism; oxidative phosphorylation. Functionally, component of the mitochondrial respiratory complex IV (CIV, also named cytochrome c oxidase complex), the last enzyme in the mitochondrial electron transport chain which drives oxidative phosphorylation. The CIV complex is the component of the respiratory chain that catalyzes the reduction of oxygen to water. Acts as an assembly factor that specifically drives the homodimerization of CIV complexes, mediating the formation of mitochondrial respiratory supercomplexes (respirasomes) containing two CIV: supercomplxes with two molecules of CIV show improved activity. Despite being highly expressed in brown adipose tissue, not required for thermogenesis. This is Cytochrome c oxidase subunit 7A1, mitochondrial (COX7A1) from Trachypithecus cristatus (Silvered leaf-monkey).